The primary structure comprises 370 residues: Phospho-N-acetylmuramoyl-pentapeptide-transferase (370 aa).

10 helical membrane passes run 24-44 (YLTF…VAMG), 78-98 (TMGG…WADL), 103-123 (VWVV…DDYA), 138-158 (KLVA…LFAP), 177-197 (ALVI…IAGF), 209-229 (GLAI…AYLV), 245-265 (GVGE…GFLW), 273-293 (IFMG…IAVC), 298-318 (LVLG…MIQV), and 347-367 (TVVI…LATL).

The protein belongs to the glycosyltransferase 4 family. MraY subfamily. The cofactor is Mg(2+).

Its subcellular location is the cell inner membrane. The enzyme catalyses UDP-N-acetyl-alpha-D-muramoyl-L-alanyl-gamma-D-glutamyl-meso-2,6-diaminopimeloyl-D-alanyl-D-alanine + di-trans,octa-cis-undecaprenyl phosphate = di-trans,octa-cis-undecaprenyl diphospho-N-acetyl-alpha-D-muramoyl-L-alanyl-D-glutamyl-meso-2,6-diaminopimeloyl-D-alanyl-D-alanine + UMP. It participates in cell wall biogenesis; peptidoglycan biosynthesis. In terms of biological role, catalyzes the initial step of the lipid cycle reactions in the biosynthesis of the cell wall peptidoglycan: transfers peptidoglycan precursor phospho-MurNAc-pentapeptide from UDP-MurNAc-pentapeptide onto the lipid carrier undecaprenyl phosphate, yielding undecaprenyl-pyrophosphoryl-MurNAc-pentapeptide, known as lipid I. The sequence is that of Phospho-N-acetylmuramoyl-pentapeptide-transferase from Caulobacter vibrioides (strain NA1000 / CB15N) (Caulobacter crescentus).